A 349-amino-acid polypeptide reads, in one-letter code: 2-oxoglutarate and iron-dependent oxygenase domain-containing protein 2 (349 aa).

Residues 214–308 (DSHRAFVVKY…RWNLVVWLRA (95 aa)) enclose the Fe2OG dioxygenase domain. The Fe cation site is built by His234, Asp236, and His289. A 2-oxoglutarate-binding site is contributed by Arg299.

It belongs to the OGFOD2 family. Requires Fe(2+) as cofactor. L-ascorbate is required as a cofactor.

The sequence is that of 2-oxoglutarate and iron-dependent oxygenase domain-containing protein 2 (Ogfod2) from Mus musculus (Mouse).